The following is a 376-amino-acid chain: GDSL esterase/lipase At5g55050 (376 aa).

Positions 1–29 (MPTNNTPFLTIFLLFLGLLRFDSFPGLEA) are cleaved as a signal peptide. Ser-46 functions as the Nucleophile in the catalytic mechanism. N-linked (GlcNAc...) asparagine glycans are attached at residues Asn-134 and Asn-245. Residues Asp-340 and His-344 contribute to the active site.

This sequence belongs to the 'GDSL' lipolytic enzyme family.

The protein localises to the secreted. The sequence is that of GDSL esterase/lipase At5g55050 from Arabidopsis thaliana (Mouse-ear cress).